We begin with the raw amino-acid sequence, 500 residues long: Na(+)/H(+) antiporter NhaB (500 aa).

Helical transmembrane passes span 34–54 (LLLATLGPVVTGWVLVIQFIF), 58–78 (MALKCYPLMPGGLLLVEALLL), 96–116 (VILLLMFMVAGIHFMKELLLF), 129–149 (AVLSLLFCVLSAFLSAFLDAL), 150–170 (TVTAVIISAAVGFYAVYHRVA), 205–225 (LLMHGAVGTALGGVCTLVGEP), 241–261 (FFLKVAPVSMPVLAAGLVTCV), 311–331 (ILIVCLGLHIAEVGLIGLMVI), 350–370 (FQDAMPFTALLVVFFAVVAVI), 394–414 (MLYLANGLLSAISDNVFVATI), 450–470 (ATPNGQAAFLFLLTSAIAPLI), and 477–497 (MVWMALPYTVVMGGLGWWAVT).

Belongs to the NhaB Na(+)/H(+) (TC 2.A.34) antiporter family.

The protein localises to the cell inner membrane. The enzyme catalyses 2 Na(+)(in) + 3 H(+)(out) = 2 Na(+)(out) + 3 H(+)(in). In terms of biological role, na(+)/H(+) antiporter that extrudes sodium in exchange for external protons. The protein is Na(+)/H(+) antiporter NhaB of Pseudomonas entomophila (strain L48).